We begin with the raw amino-acid sequence, 294 residues long: Ribosomal RNA small subunit methyltransferase A (294 aa).

Residues N33, L35, G60, E81, D106, and N131 each coordinate S-adenosyl-L-methionine.

The protein belongs to the class I-like SAM-binding methyltransferase superfamily. rRNA adenine N(6)-methyltransferase family. RsmA subfamily.

It is found in the cytoplasm. It carries out the reaction adenosine(1518)/adenosine(1519) in 16S rRNA + 4 S-adenosyl-L-methionine = N(6)-dimethyladenosine(1518)/N(6)-dimethyladenosine(1519) in 16S rRNA + 4 S-adenosyl-L-homocysteine + 4 H(+). Its function is as follows. Specifically dimethylates two adjacent adenosines (A1518 and A1519) in the loop of a conserved hairpin near the 3'-end of 16S rRNA in the 30S particle. May play a critical role in biogenesis of 30S subunits. This is Ribosomal RNA small subunit methyltransferase A from Lactococcus lactis subsp. lactis (strain IL1403) (Streptococcus lactis).